Here is a 158-residue protein sequence, read N- to C-terminus: Large ribosomal subunit protein bL21 (158 aa).

The segment at 127-158 (TQETKSAASVKKAAKKSAPQKQAAVASNSKED) is disordered. Residues 131-158 (KSAASVKKAAKKSAPQKQAAVASNSKED) show a composition bias toward low complexity.

The protein belongs to the bacterial ribosomal protein bL21 family. In terms of assembly, part of the 50S ribosomal subunit. Contacts protein L20.

Its function is as follows. This protein binds to 23S rRNA in the presence of protein L20. This is Large ribosomal subunit protein bL21 from Bartonella henselae (strain ATCC 49882 / DSM 28221 / CCUG 30454 / Houston 1) (Rochalimaea henselae).